The chain runs to 275 residues: Large ribosomal subunit protein uL2 (275 aa).

The tract at residues R218–K275 is disordered. A compositionally biased stretch (basic residues) spans Y257–K275.

Belongs to the universal ribosomal protein uL2 family. Part of the 50S ribosomal subunit. Forms a bridge to the 30S subunit in the 70S ribosome.

In terms of biological role, one of the primary rRNA binding proteins. Required for association of the 30S and 50S subunits to form the 70S ribosome, for tRNA binding and peptide bond formation. It has been suggested to have peptidyltransferase activity; this is somewhat controversial. Makes several contacts with the 16S rRNA in the 70S ribosome. In Sulfurovum sp. (strain NBC37-1), this protein is Large ribosomal subunit protein uL2.